We begin with the raw amino-acid sequence, 428 residues long: Glutamate-1-semialdehyde 2,1-aminomutase (428 aa).

Residue Lys267 is modified to N6-(pyridoxal phosphate)lysine.

It belongs to the class-III pyridoxal-phosphate-dependent aminotransferase family. HemL subfamily. In terms of assembly, homodimer. It depends on pyridoxal 5'-phosphate as a cofactor.

It is found in the cytoplasm. It carries out the reaction (S)-4-amino-5-oxopentanoate = 5-aminolevulinate. The protein operates within porphyrin-containing compound metabolism; protoporphyrin-IX biosynthesis; 5-aminolevulinate from L-glutamyl-tRNA(Glu): step 2/2. Its pathway is porphyrin-containing compound metabolism; chlorophyll biosynthesis. The chain is Glutamate-1-semialdehyde 2,1-aminomutase from Prochlorococcus marinus (strain MIT 9313).